The following is a 27-amino-acid chain: Augerpeptide hhe6.2 (27 aa).

3 disulfides stabilise this stretch: cysteine 4/cysteine 13, cysteine 8/cysteine 20, and cysteine 12/cysteine 27.

Expressed by the venom duct.

Its subcellular location is the secreted. This is Augerpeptide hhe6.2 from Hastula hectica (Sea snail).